Consider the following 186-residue polypeptide: TATA-box-binding protein D (186 aa).

Repeat copies occupy residues I10–L86 and V101–L179.

Belongs to the TBP family.

Functionally, general factor that plays a role in the activation of archaeal genes transcribed by RNA polymerase. Binds specifically to the TATA box promoter element which lies close to the position of transcription initiation. The chain is TATA-box-binding protein D (tbpD) from Halobacterium salinarum (strain ATCC 700922 / JCM 11081 / NRC-1) (Halobacterium halobium).